The following is a 237-amino-acid chain: Phosphoribosylaminoimidazole-succinocarboxamide synthase (237 aa).

This sequence belongs to the SAICAR synthetase family.

It catalyses the reaction 5-amino-1-(5-phospho-D-ribosyl)imidazole-4-carboxylate + L-aspartate + ATP = (2S)-2-[5-amino-1-(5-phospho-beta-D-ribosyl)imidazole-4-carboxamido]succinate + ADP + phosphate + 2 H(+). Its pathway is purine metabolism; IMP biosynthesis via de novo pathway; 5-amino-1-(5-phospho-D-ribosyl)imidazole-4-carboxamide from 5-amino-1-(5-phospho-D-ribosyl)imidazole-4-carboxylate: step 1/2. The polypeptide is Phosphoribosylaminoimidazole-succinocarboxamide synthase (Yersinia pseudotuberculosis serotype O:1b (strain IP 31758)).